Reading from the N-terminus, the 291-residue chain is Tobamovirus multiplication protein 1 (291 aa).

Over M1–D3 the chain is Cytoplasmic. The chain crosses the membrane as a helical span at residues S4–W24. Residues D25–G36 are Extracellular-facing. An N-linked (GlcNAc...) asparagine glycan is attached at N28. A helical transmembrane segment spans residues I37 to I57. Residues R58–N78 lie on the Cytoplasmic side of the membrane. A helical membrane pass occupies residues F79–H99. The Extracellular segment spans residues P100–C104. The helical transmembrane segment at W105–F125 threads the bilayer. Over W126–T144 the chain is Cytoplasmic. A helical membrane pass occupies residues Y145 to V165. The Extracellular segment spans residues H166–E172. N-linked (GlcNAc...) asparagine glycosylation occurs at N168. The helical transmembrane segment at L173–Y193 threads the bilayer. Residues G194–S220 are Cytoplasmic-facing. Residues V221–F241 traverse the membrane as a helical segment. Residues D242–P253 are Extracellular-facing. The helical transmembrane segment at V254–I274 threads the bilayer. Over L275–Q291 the chain is Cytoplasmic.

Belongs to the plant tobamovirus multiplication TOM1 protein family. As to quaternary structure, constituent of tobamovirus replication complex. Interacts with TOM2A and with the helicase domain of tobamovirus-encoded replication proteins.

The protein localises to the vacuole membrane. Necessary for the efficient intracellular multiplication of tobamoviruses, probably being a membrane anchor promoting the formation of the replication complex. The polypeptide is Tobamovirus multiplication protein 1 (TOM1) (Arabidopsis thaliana (Mouse-ear cress)).